The chain runs to 326 residues: MAFTPFPPRQPTASARLPLTLMTLDDWALATITGADSEKYMQGQVTADVSQMTENQHLLAAHCDAKGKMWSNLRLFRDGDGFAWIERRSVREPQLTELKKYAVFSKVTIAADDERVLLGVAGFQARAALANLFSELPSREKQVVKEGATTLLWFEHPAERFLIVTDEATANMLTDKLRGEAELNNSQQWLALNIEAGFPVIDAANSGQFIPQATNLQALGGISFKKGCYTGQEMVARAKFRGANKRALWLLAGSASRLPEAGEDLELKMGENWRRTGTVLAAVKLEDGQVVVQVVMNNDMEPDSIFRVRDDANTLHIEPLPYSLEE.

Folate contacts are provided by tryptophan 27 and tryptophan 189.

This sequence belongs to the tRNA-modifying YgfZ family.

It is found in the cytoplasm. Its function is as follows. Folate-binding protein involved in regulating the level of ATP-DnaA and in the modification of some tRNAs. It is probably a key factor in regulatory networks that act via tRNA modification, such as initiation of chromosomal replication. The chain is tRNA-modifying protein YgfZ from Shigella boydii serotype 4 (strain Sb227).